A 190-amino-acid polypeptide reads, in one-letter code: UPF0301 protein Rpic_0619 (190 aa).

This sequence belongs to the UPF0301 (AlgH) family.

The chain is UPF0301 protein Rpic_0619 from Ralstonia pickettii (strain 12J).